Here is a 390-residue protein sequence, read N- to C-terminus: Putative 2-isopropylmalate synthase (390 aa).

The region spanning 5–267 (IIIFDTTLRD…KTNIKYQEIY (263 aa)) is the Pyruvate carboxyltransferase domain. Mn(2+) contacts are provided by Asp14, His202, His204, and Asn238.

It belongs to the alpha-IPM synthase/homocitrate synthase family. LeuA type 1 subfamily. As to quaternary structure, homodimer. The cofactor is Mn(2+).

The protein resides in the cytoplasm. It carries out the reaction 3-methyl-2-oxobutanoate + acetyl-CoA + H2O = (2S)-2-isopropylmalate + CoA + H(+). It functions in the pathway amino-acid biosynthesis; L-leucine biosynthesis; L-leucine from 3-methyl-2-oxobutanoate: step 1/4. Its function is as follows. Catalyzes the condensation of the acetyl group of acetyl-CoA with 3-methyl-2-oxobutanoate (2-ketoisovalerate) to form 3-carboxy-3-hydroxy-4-methylpentanoate (2-isopropylmalate). The sequence is that of Putative 2-isopropylmalate synthase from Buchnera aphidicola subsp. Baizongia pistaciae (strain Bp).